Consider the following 141-residue polypeptide: Ribosomal RNA large subunit methyltransferase H (141 aa).

Residue G88 participates in S-adenosyl-L-methionine binding.

Belongs to the RNA methyltransferase RlmH family. In terms of assembly, homodimer.

Its subcellular location is the cytoplasm. It catalyses the reaction pseudouridine(1915) in 23S rRNA + S-adenosyl-L-methionine = N(3)-methylpseudouridine(1915) in 23S rRNA + S-adenosyl-L-homocysteine + H(+). Functionally, specifically methylates the pseudouridine at position 1915 (m3Psi1915) in 23S rRNA. This chain is Ribosomal RNA large subunit methyltransferase H, found in Novosphingobium aromaticivorans (strain ATCC 700278 / DSM 12444 / CCUG 56034 / CIP 105152 / NBRC 16084 / F199).